The following is a 78-amino-acid chain: Large ribosomal subunit protein bL28 (78 aa).

The interval methionine 1–aspartate 30 is disordered.

This sequence belongs to the bacterial ribosomal protein bL28 family.

The protein is Large ribosomal subunit protein bL28 of Micrococcus luteus (strain ATCC 4698 / DSM 20030 / JCM 1464 / CCM 169 / CCUG 5858 / IAM 1056 / NBRC 3333 / NCIMB 9278 / NCTC 2665 / VKM Ac-2230) (Micrococcus lysodeikticus).